The sequence spans 926 residues: Armadillo repeat-containing protein 5 (926 aa).

Over residues 82-104 (PAPSQAASGSAPSSVASAGSTPG) the composition is skewed to low complexity. The disordered stretch occupies residues 82 to 111 (PAPSQAASGSAPSSVASAGSTPGHAPAAES). ARM repeat units lie at residues 139–179 (GACR…NLAM), 181–221 (PESC…NLAD), 223–263 (PQHR…ELSR), 267–306 (RACA…NLCA), 307–354 (QGLV…LCRE), 355–399 (AINR…DTGA), and 401–440 (GKLQ…EERT). S337 bears the Phosphoserine mark. Positions 472–516 (WSPERCPMPEPSESVSPTPGQTSMSTPRTLRKPGRIPAATPEEPW) are disordered. The segment covering 484-499 (ESVSPTPGQTSMSTPR) has biased composition (polar residues). In terms of domain architecture, BTB spans 745–813 (PDLHFVLDSG…LHGCRGCGAA (69 aa)).

Substrate-recognition component of the BCR(ARMC5) E3 ubiquitin ligase complex, at least composed of CUL3, ARMC5 and RBX1. Ubiquitinated by a BCR (BTB-CUL3-RBX1) E3 ubiquitin ligase complex, leading to its degradation. Deubiquitinated by USP7. In terms of tissue distribution, expression is high in the thymus, stomach, bone marrow and lymphatic tissues (including lymph nodes and intestinal wall). Also expressed in the adrenal gland, skin and in brain structures, with noticeable levels found in the cerebellum.

Its subcellular location is the nucleus. It localises to the chromosome. The protein localises to the cytoplasm. Its pathway is protein modification; protein ubiquitination. Substrate-recognition component of a BCR (BTB-CUL3-RBX1) E3 ubiquitin ligase complex that terminates RNA polymerase II (Pol II) transcription in the promoter-proximal region of genes. The BCR(ARMC5) complex provides a quality checkpoint during transcription elongation by driving premature transcription termination of transcripts that are unfavorably configured for transcriptional elongation: the BCR(ARMC5) complex acts by mediating ubiquitination of Pol II subunit POLR2A phosphorylated at 'Ser-5' of the C-terminal domain (CTD), leading to POLR2A degradation. The BCR(ARMC5) complex acts in parallel of the integrator complex and is specific for RNA Pol II originating from the promoter-proximal zone: it does not ubiquitinate elongation-stalled RNA Pol II. The BCR(ARMC5) complex also acts as a regulator of fatty acid desaturation by mediating ubiquitination and degradation of SCAP-free SREBF1 and SREBF2. Involved in fetal development, T-cell function and adrenal gland growth homeostasis. Plays a role in steroidogenesis, modulates steroidogenic enzymes expression and cortisol production. The polypeptide is Armadillo repeat-containing protein 5 (Mus musculus (Mouse)).